The following is a 170-amino-acid chain: MSVAGGEIRGDTGGEDTAAPGRFSFSPEPTLEDIRRLHAEFAAERDWEQFHQPRNLLLALVGEVGELAELFQWKTDGEPGPQGWSPRERAALQEELSDVLIYLVALAARCRVDLPLAVLSKMDINRRRYPAHLARSSSRKYTELPHGAISEDQAVGPADIPCDSTGQTST.

A disordered region spans residues 1–27 (MSVAGGEIRGDTGGEDTAAPGRFSFSP). The residue at position 2 (S2) is an N-acetylserine. Phosphoserine is present on S2. Phosphothreonine is present on T12. Residues H38 and 47 to 51 (WEQFH) contribute to the substrate site. The Mg(2+) site is built by E63 and E66. W73 lines the substrate pocket. The residue at position 85 (S85) is a Phosphoserine. The Mg(2+) site is built by E95 and D98. Y102 contacts substrate. Residues 147 to 170 (GAISEDQAVGPADIPCDSTGQTST) are disordered.

In terms of assembly, homotetramer. Requires Mg(2+) as cofactor.

Its subcellular location is the mitochondrion. It is found in the nucleus. The protein localises to the cytoplasm. The protein resides in the cytosol. The catalysed reaction is dCTP + H2O = dCMP + diphosphate + H(+). Its activity is regulated as follows. Inhibited by the reaction end product PPi. Inhibited by dCDP. Inhibited by triptolide. Hydrolyzes deoxynucleoside triphosphates (dNTPs) to the corresponding nucleoside monophosphates. Has a strong preference for dCTP and its analogs including 5-iodo-dCTP and 5-methyl-dCTP for which it may even have a higher efficiency. May protect DNA or RNA against the incorporation of these genotoxic nucleotide analogs through their catabolism. This Homo sapiens (Human) protein is dCTP pyrophosphatase 1.